The following is a 2079-amino-acid chain: Non-reducing polyketide synthase Dhc5 (2079 aa).

The segment at 9 to 246 (LLFGDVTDPW…DELNIHALQH (238 aa)) is N-terminal acylcarrier protein transacylase domain (SAT). Residues 366–798 (NDGIAIVGMA…GGNACLLLED (433 aa)) form the Ketosynthase family 3 (KS3) domain. Catalysis depends on for beta-ketoacyl synthase activity residues C543, H678, and H717. The interval 895-1199 (VFVFTGQGSH…MTHSLQPKTS (305 aa)) is malonyl-CoA:ACP transacylase (MAT) domain. S986 functions as the For acyl/malonyl transferase activity in the catalytic mechanism. The segment at 1268–1414 (EPLISTCAQY…DPTRSQVEWD (147 aa)) is N-terminal hotdog fold. The 317-residue stretch at 1268–1584 (EPLISTCAQY…YQELPRATWK (317 aa)) folds into the PKS/mFAS DH domain. Residues 1304–1581 (MDGHKMQGIG…DIRYQELPRA (278 aa)) are product template (PT) domain. A C-terminal hotdog fold region spans residues 1435–1584 (RGHRMQPEVF…YQELPRATWK (150 aa)). A disordered region spans residues 1613 to 1639 (RELQQPSSATVPAQETTIDEPEQQEGE). Residues 1615-1628 (LQQPSSATVPAQET) are compositionally biased toward polar residues. One can recognise a Carrier domain in the interval 1641-1718 (AAGARLFNAI…DLRKEFRANE (78 aa)). S1678 bears the O-(pantetheine 4'-phosphoryl)serine mark. The interval 1721-1784 (VENPRFSATP…EQKRPVKIDD (64 aa)) is disordered. A compositionally biased stretch (low complexity) spans 1727–1757 (SATPSSAEASIPSSPSSLAHPMSDSASSLSP). The segment covering 1758–1784 (SDREEALPLERQSMTKREQKRPVKIDD) has biased composition (basic and acidic residues). A thioesterase (TE) domain region spans residues 1812-2057 (ADGTGTIATY…LSVAGDHLDL (246 aa)). H2064 serves as the catalytic For thioesterase activity.

It participates in mycotoxin biosynthesis. Its function is as follows. Highly reducing polyketide synthase; part of the gene cluster that mediates the biosynthesis of 10,11-dehydrocurvularin, a prevalent fungal phytotoxin with heat shock response and immune-modulatory activities. The highly reducing polyketide synthase Dhc3 is responsible for biosynthesis up to the tetraketide stage. The non-reducing polyketide synthase Dhc5 then conducts four additional chain extension cycles, producing the unreduced part of the nascent octaketide from C-1 to C-8 in 10,11-dehydrocurvularin. This chain is Non-reducing polyketide synthase Dhc5, found in Alternaria cinerariae.